A 414-amino-acid chain; its full sequence is Esterase FrsA (414 aa).

Belongs to the FrsA family.

The enzyme catalyses a carboxylic ester + H2O = an alcohol + a carboxylate + H(+). In terms of biological role, catalyzes the hydrolysis of esters. This Escherichia fergusonii (strain ATCC 35469 / DSM 13698 / CCUG 18766 / IAM 14443 / JCM 21226 / LMG 7866 / NBRC 102419 / NCTC 12128 / CDC 0568-73) protein is Esterase FrsA.